Reading from the N-terminus, the 35-residue chain is uncharacterized protein (35 aa).

This is an uncharacterized protein from Archaeoglobus fulgidus (strain ATCC 49558 / DSM 4304 / JCM 9628 / NBRC 100126 / VC-16).